Here is a 41-residue protein sequence, read N- to C-terminus: M-factor (41 aa).

The disordered stretch occupies residues 1–25 (MDSMANTVSSSVVNTGNKPSETLNK). Positions 1 to 29 (MDSMANTVSSSVVNTGNKPSETLNKTVKN) are excised as a propeptide. Position 38 is a cysteine methyl ester (cysteine 38). A lipid anchor (S-farnesyl cysteine) is attached at cysteine 38. Positions 39 to 41 (VIA) are cleaved as a propeptide — removed in mature form.

Its subcellular location is the secreted. In terms of biological role, M-factor is a mating pheromone produced by M-type mating cells. All three mfm genes contribute to the production of M-factor. In Schizosaccharomyces pombe (strain 972 / ATCC 24843) (Fission yeast), this protein is M-factor (mfm3).